The following is a 383-amino-acid chain: D-alanine--D-alanine ligase (383 aa).

Residues 164 to 373 (KLAFQAAGLE…YSALIDELIT (210 aa)) form the ATP-grasp domain. 196-251 (VAELGFPVFVKPARAGSSFGITRVDEPSQLDAAIATAREHDLKLVVEAGIDGREIE) serves as a coordination point for ATP. Mg(2+) contacts are provided by Asp-327, Glu-340, and Asn-342.

The protein belongs to the D-alanine--D-alanine ligase family. The cofactor is Mg(2+). It depends on Mn(2+) as a cofactor.

It is found in the cytoplasm. It carries out the reaction 2 D-alanine + ATP = D-alanyl-D-alanine + ADP + phosphate + H(+). It participates in cell wall biogenesis; peptidoglycan biosynthesis. Cell wall formation. The sequence is that of D-alanine--D-alanine ligase from Kocuria rhizophila (strain ATCC 9341 / DSM 348 / NBRC 103217 / DC2201).